The primary structure comprises 161 residues: Phosphopantetheine adenylyltransferase (161 aa).

Ser9 is a binding site for substrate. ATP contacts are provided by residues 9–10 (SF) and His17. Substrate is bound by residues Lys41, Leu73, and Arg87. ATP-binding positions include 88 to 90 (GIR), Glu98, and 123 to 129 (TGFISST).

This sequence belongs to the bacterial CoaD family. Homohexamer. It depends on Mg(2+) as a cofactor.

Its subcellular location is the cytoplasm. It carries out the reaction (R)-4'-phosphopantetheine + ATP + H(+) = 3'-dephospho-CoA + diphosphate. It functions in the pathway cofactor biosynthesis; coenzyme A biosynthesis; CoA from (R)-pantothenate: step 4/5. Functionally, reversibly transfers an adenylyl group from ATP to 4'-phosphopantetheine, yielding dephospho-CoA (dPCoA) and pyrophosphate. The chain is Phosphopantetheine adenylyltransferase from Psychromonas ingrahamii (strain DSM 17664 / CCUG 51855 / 37).